The chain runs to 128 residues: Large ribosomal subunit protein bL12 (128 aa).

It belongs to the bacterial ribosomal protein bL12 family. As to quaternary structure, homodimer. Part of the ribosomal stalk of the 50S ribosomal subunit. Forms a multimeric L10(L12)X complex, where L10 forms an elongated spine to which 2 to 4 L12 dimers bind in a sequential fashion. Binds GTP-bound translation factors.

Its function is as follows. Forms part of the ribosomal stalk which helps the ribosome interact with GTP-bound translation factors. Is thus essential for accurate translation. The chain is Large ribosomal subunit protein bL12 from Sulfurihydrogenibium sp. (strain YO3AOP1).